The chain runs to 955 residues: 2-oxoglutarate dehydrogenase E1 component (955 aa).

Belongs to the alpha-ketoglutarate dehydrogenase family. In terms of assembly, homodimer. Part of the 2-oxoglutarate dehydrogenase (OGDH) complex composed of E1 (2-oxoglutarate dehydrogenase), E2 (dihydrolipoamide succinyltransferase) and E3 (dihydrolipoamide dehydrogenase); the complex contains multiple copies of the three enzymatic components (E1, E2 and E3). Requires thiamine diphosphate as cofactor.

The enzyme catalyses N(6)-[(R)-lipoyl]-L-lysyl-[protein] + 2-oxoglutarate + H(+) = N(6)-[(R)-S(8)-succinyldihydrolipoyl]-L-lysyl-[protein] + CO2. In terms of biological role, E1 component of the 2-oxoglutarate dehydrogenase (OGDH) complex which catalyzes the decarboxylation of 2-oxoglutarate, the first step in the conversion of 2-oxoglutarate to succinyl-CoA and CO(2). The sequence is that of 2-oxoglutarate dehydrogenase E1 component from Bacillus cereus (strain AH187).